The following is a 165-amino-acid chain: MITKLIPRKVFFTSGVGLHSEKLESFEVSLRDAGIEKFNLVTVSSILPPNCEIVTKEEGLKELSPGEVVFCVMSRISSNEPGKTLSTSVGCALPRDISKHGYISEYHAYEENAQDVGEHAKKLAGSMYSTWTNEAPLKTFSIPRSSSVQESGDWMTVISAAVFII.

S45 is subject to Pyruvic acid (Ser).

Belongs to the PdaD family. Pyruvate serves as cofactor.

The catalysed reaction is L-arginine + H(+) = agmatine + CO2. The sequence is that of Pyruvoyl-dependent arginine decarboxylase 1 (pdaD1) from Methanosarcina acetivorans (strain ATCC 35395 / DSM 2834 / JCM 12185 / C2A).